Here is a 204-residue protein sequence, read N- to C-terminus: ATP-dependent Clp protease proteolytic subunit (204 aa).

Catalysis depends on S102, which acts as the Nucleophile. H127 is an active-site residue.

This sequence belongs to the peptidase S14 family. Fourteen ClpP subunits assemble into 2 heptameric rings which stack back to back to give a disk-like structure with a central cavity, resembling the structure of eukaryotic proteasomes.

The protein localises to the cytoplasm. It catalyses the reaction Hydrolysis of proteins to small peptides in the presence of ATP and magnesium. alpha-casein is the usual test substrate. In the absence of ATP, only oligopeptides shorter than five residues are hydrolyzed (such as succinyl-Leu-Tyr-|-NHMec, and Leu-Tyr-Leu-|-Tyr-Trp, in which cleavage of the -Tyr-|-Leu- and -Tyr-|-Trp bonds also occurs).. Its function is as follows. Cleaves peptides in various proteins in a process that requires ATP hydrolysis. Has a chymotrypsin-like activity. Plays a major role in the degradation of misfolded proteins. The sequence is that of ATP-dependent Clp protease proteolytic subunit from Neisseria meningitidis serogroup A / serotype 4A (strain DSM 15465 / Z2491).